Here is a 299-residue protein sequence, read N- to C-terminus: NAD kinase (299 aa).

D64 acts as the Proton acceptor in catalysis. NAD(+)-binding positions include 64 to 65 (DG), 138 to 139 (ND), R149, R166, D168, 179 to 184 (TGYAVS), and Q238.

The protein belongs to the NAD kinase family. It depends on a divalent metal cation as a cofactor.

It is found in the cytoplasm. The enzyme catalyses NAD(+) + ATP = ADP + NADP(+) + H(+). Functionally, involved in the regulation of the intracellular balance of NAD and NADP, and is a key enzyme in the biosynthesis of NADP. Catalyzes specifically the phosphorylation on 2'-hydroxyl of the adenosine moiety of NAD to yield NADP. This chain is NAD kinase, found in Nitratidesulfovibrio vulgaris (strain ATCC 29579 / DSM 644 / CCUG 34227 / NCIMB 8303 / VKM B-1760 / Hildenborough) (Desulfovibrio vulgaris).